The sequence spans 238 residues: MSQSLIVALDFPGKQDVEQFLRHFEGEELFVKVGMELFYKEGPAIITYLKEKGHKIFLDLKLHDIPNTVKSAMRSLASLDVDMVNVHAGGGSSMMKAAIEGLEEGKQEGKERPICIAVTQLTSTSETMMKKEIGIEKTLEEAVAHYAKLTKESGLDGVVCSTLEVPKLREVCGSEFVTVTPGIRLASDDVNDQVRVATPKRARELGSSYIVVGRSITKAENPLEAYKTVKQQWEGVTV.

Substrate is bound by residues Asp-10, Lys-32, 59–68, Thr-122, Arg-184, Gln-193, Gly-213, and Arg-214; that span reads DLKLHDIPNT. The active-site Proton donor is the Lys-61.

Belongs to the OMP decarboxylase family. Type 1 subfamily. In terms of assembly, homodimer.

It catalyses the reaction orotidine 5'-phosphate + H(+) = UMP + CO2. It functions in the pathway pyrimidine metabolism; UMP biosynthesis via de novo pathway; UMP from orotate: step 2/2. In terms of biological role, catalyzes the decarboxylation of orotidine 5'-monophosphate (OMP) to uridine 5'-monophosphate (UMP). The protein is Orotidine 5'-phosphate decarboxylase of Bacillus anthracis (strain A0248).